A 348-amino-acid polypeptide reads, in one-letter code: UDP-3-O-acylglucosamine N-acyltransferase (348 aa).

His-257 (proton acceptor) is an active-site residue.

This sequence belongs to the transferase hexapeptide repeat family. LpxD subfamily. As to quaternary structure, homotrimer.

It carries out the reaction a UDP-3-O-[(3R)-3-hydroxyacyl]-alpha-D-glucosamine + a (3R)-hydroxyacyl-[ACP] = a UDP-2-N,3-O-bis[(3R)-3-hydroxyacyl]-alpha-D-glucosamine + holo-[ACP] + H(+). Its pathway is bacterial outer membrane biogenesis; LPS lipid A biosynthesis. Catalyzes the N-acylation of UDP-3-O-acylglucosamine using 3-hydroxyacyl-ACP as the acyl donor. Is involved in the biosynthesis of lipid A, a phosphorylated glycolipid that anchors the lipopolysaccharide to the outer membrane of the cell. In Bartonella henselae (strain ATCC 49882 / DSM 28221 / CCUG 30454 / Houston 1) (Rochalimaea henselae), this protein is UDP-3-O-acylglucosamine N-acyltransferase.